The primary structure comprises 134 residues: Small ribosomal subunit protein uS8 (134 aa).

Belongs to the universal ribosomal protein uS8 family. Part of the 30S ribosomal subunit. Contacts proteins S5 and S12.

Its function is as follows. One of the primary rRNA binding proteins, it binds directly to 16S rRNA central domain where it helps coordinate assembly of the platform of the 30S subunit. This Thermotoga sp. (strain RQ2) protein is Small ribosomal subunit protein uS8.